A 2380-amino-acid chain; its full sequence is DNA polymerase epsilon catalytic subunit A (2380 aa).

The span at Tyr169 to Lys196 shows a compositional bias: low complexity. 5 disordered regions span residues Tyr169–Lys209, Phe1178–Asp1210, Lys1766–Thr1787, Gln1967–Lys1998, and Lys2059–Ser2120. The segment covering Glu1183–Asn1201 has biased composition (acidic residues). Residues Asn1767–Asn1776 show a composition bias toward low complexity. A compositionally biased stretch (polar residues) spans Gly1777 to Thr1787. A compositionally biased stretch (acidic residues) spans Asn1975–Gln1991. Low complexity-rich tracts occupy residues Lys2059–Asp2081 and Ser2110–Ser2120. Positions 2225 and 2228 each coordinate Zn(2+). A CysA-type zinc finger spans residues Cys2225–Cys2288. A compositionally biased stretch (low complexity) spans Ile2245 to Asn2258. Residues Ile2245–Asp2275 are disordered. A compositionally biased stretch (acidic residues) spans Asp2259–Asp2275. Residues Cys2285 and Cys2288 each contribute to the Zn(2+) site. The [4Fe-4S] cluster site is built by Cys2319, Cys2322, Cys2334, and Cys2337. The CysB motif motif lies at Cys2319 to Cys2337.

The protein belongs to the DNA polymerase type-B family. Consists of three subunits: pole, pole2 and pole3. [4Fe-4S] cluster serves as cofactor.

It localises to the nucleus. It carries out the reaction DNA(n) + a 2'-deoxyribonucleoside 5'-triphosphate = DNA(n+1) + diphosphate. Its function is as follows. DNA polymerase II participates in chromosomal DNA replication. This chain is DNA polymerase epsilon catalytic subunit A (pole), found in Dictyostelium discoideum (Social amoeba).